The following is a 132-amino-acid chain: DNA-directed RNA polymerase subunit omega (132 aa).

A disordered region spans residues 90–109 (SSEAGGVLGTSSEEEGSSFD).

The protein belongs to the RNA polymerase subunit omega family. In terms of assembly, the RNAP catalytic core consists of 2 alpha, 1 beta, 1 beta' and 1 omega subunit. When a sigma factor is associated with the core the holoenzyme is formed, which can initiate transcription.

It carries out the reaction RNA(n) + a ribonucleoside 5'-triphosphate = RNA(n+1) + diphosphate. In terms of biological role, promotes RNA polymerase assembly. Latches the N- and C-terminal regions of the beta' subunit thereby facilitating its interaction with the beta and alpha subunits. The chain is DNA-directed RNA polymerase subunit omega from Bartonella henselae (strain ATCC 49882 / DSM 28221 / CCUG 30454 / Houston 1) (Rochalimaea henselae).